The following is an 827-amino-acid chain: Villin-1 (827 aa).

The segment at 1 to 126 is necessary for homodimerization; it reads MTKLNAQVKG…IRKGGVASGM (126 aa). The tract at residues 1–734 is core; it reads MTKLNAQVKG…YDDLKAELGN (734 aa). Residues 27–76 form a Gelsolin-like 1 repeat; sequence MQMVPVPSSTFGSFFDGDCYVVLAIHKTSSTLSYDIHYWIGQDSSQDEQG. LPA/PIP2-binding site stretches follow at residues 112 to 119 and 138 to 146; these read KQGLVIRK and RLLHVKGKR. Gelsolin-like repeat units lie at residues 148-188 and 265-309; these read VLAG…MERL and LVVR…QERS. Ser366 is modified (phosphoserine). Gelsolin-like repeat units lie at residues 407–457, 528–568, and 631–672; these read DLEL…DEIA, TKAF…DERE, and FLAT…EEKK. Residues Ser735 and Ser776 each carry the phosphoserine modification. The headpiece stretch occupies residues 735 to 827; the sequence is SGDWSQIADE…QNIKKEKGLF (93 aa). One can recognise an HP domain in the interval 761-827; it reads SGPLPTFPLE…QNIKKEKGLF (67 aa). Residues 816–824 are LPA/PIP2-binding site 3; the sequence is KQQNIKKEK.

It belongs to the villin/gelsolin family. As to quaternary structure, monomer. Homodimer; homodimerization is necessary for actin-bundling. Associates with F-actin; phosphorylation at tyrosine residues decreases the association with F-actin. Interacts (phosphorylated at C-terminus tyrosine phosphorylation sites) with PLCG1 (via the SH2 domains). Interacts (phosphorylated form) with PLCG1; the interaction is enhanced by hepatocyte growth factor (HGF). Phosphorylated on tyrosine residues by SRC. The unphosphorylated form increases the initial rate of actin-nucleating activity, whereas the tyrosine phosphorylated form inhibits actin-nucleating activity, enhances actin-bundling activity and enhances actin-severing activity by reducing high Ca(2+) requirements. The tyrosine phosphorylated form does not regulate actin-capping activity. Tyrosine phosphorylation is essential for cell migration: tyrosine phosphorylation sites in the N-terminus half regulate actin reorganization and cell morphology, whereas tyrosine phosphorylation sites in the C-terminus half regulate cell migration via interaction with PLCG1. Tyrosine phosphorylation is induced by epidermal growth factor (EGF) and stimulates cell migration. As to expression, expressed in small intestin, colon, kidney and enterocytes (at protein level).

The protein localises to the cytoplasm. Its subcellular location is the cytoskeleton. It is found in the cell projection. The protein resides in the microvillus. It localises to the lamellipodium. The protein localises to the ruffle. Its subcellular location is the filopodium tip. It is found in the filopodium. Functionally, epithelial cell-specific Ca(2+)-regulated actin-modifying protein that modulates the reorganization of microvillar actin filaments. Plays a role in the actin nucleation, actin filament bundle assembly, actin filament capping and severing. Binds phosphatidylinositol 4,5-bisphosphate (PIP2) and lysophosphatidic acid (LPA); binds LPA with higher affinity than PIP2. Binding to LPA increases its phosphorylation by SRC and inhibits all actin-modifying activities. Binding to PIP2 inhibits actin-capping and -severing activities but enhances actin-bundling activity. Regulates the intestinal epithelial cell morphology, cell invasion, cell migration and apoptosis. Protects against apoptosis induced by dextran sodium sulfate (DSS) in the gastrointestinal epithelium. Appears to regulate cell death by maintaining mitochondrial integrity. Enhances hepatocyte growth factor (HGF)-induced epithelial cell motility, chemotaxis and wound repair. Upon S.flexneri cell infection, its actin-severing activity enhances actin-based motility of the bacteria and plays a role during the dissemination. The sequence is that of Villin-1 (Vil1) from Mus musculus (Mouse).